A 1342-amino-acid chain; its full sequence is DNA-directed RNA polymerase subunit beta (1342 aa).

It belongs to the RNA polymerase beta chain family. In terms of assembly, the RNAP catalytic core consists of 2 alpha, 1 beta, 1 beta' and 1 omega subunit. When a sigma factor is associated with the core the holoenzyme is formed, which can initiate transcription.

It carries out the reaction RNA(n) + a ribonucleoside 5'-triphosphate = RNA(n+1) + diphosphate. DNA-dependent RNA polymerase catalyzes the transcription of DNA into RNA using the four ribonucleoside triphosphates as substrates. This chain is DNA-directed RNA polymerase subunit beta, found in Actinobacillus pleuropneumoniae serotype 5b (strain L20).